We begin with the raw amino-acid sequence, 994 residues long: Chloride channel protein 1 (994 aa).

At 1 to 118 the chain is on the cytoplasmic side; the sequence is MERSQSQQHG…VLRRKLGEDW (118 aa). The disordered stretch occupies residues 37–61; it reads SENGGLQHRPRKDLGPRHNAHPTQI. A helical membrane pass occupies residues 119 to 150; that stretch reads IFLVLLGLLMALVSWCMDYVSAKSLQAYKWTY. The Extracellular segment spans residues 151–158; it reads AQMQPSLP. A helical transmembrane segment spans residues 159 to 179; it reads LQYLAWVTFPLILILFSALFC. Residues 180 to 183 lie on the Cytoplasmic side of the membrane; it reads QLIS. Residues 184-189 constitute an intramembrane region (note=Loop between two helices); it reads PQAVGS. The Selectivity filter part_1 motif lies at 188–192; that stretch reads GSGIP. Residue S189 coordinates chloride. Residues 190-195 constitute an intramembrane region (helical); that stretch reads GIPEMK. Residues 196–208 lie on the Cytoplasmic side of the membrane; that stretch reads TILRGVVLKEYLT. The segment at residues 209–224 is an intramembrane region (helical); the sequence is LKAFVAKVVALTAGLG. Residues 225-230 constitute an intramembrane region (note=Loop between two helices); sequence SGIPVG. The short motif at 230 to 234 is the Selectivity filter part_2 element; the sequence is GKEGP. An intramembrane region (helical) is located at residues 231 to 246; it reads KEGPFVHIASICAAVL. At 247-268 the chain is on the cytoplasmic side; the sequence is SKFMSMFSGVYEQPYYYTDILT. 2 consecutive intramembrane regions (helical) follow at residues 269–280 and 281–290; these read VGCAVGVGCCFG and TPLGGVLFSI. Topologically, residues 291-301 are cytoplasmic; sequence EVTSTYFAVRN. A helical membrane pass occupies residues 302–321; sequence YWRGFFAATFSAFVFRVLAV. Over 322–347 the chain is Extracellular; sequence WNKDAVTITALFRTNFRMDFPFDLKE. A helical transmembrane segment spans residues 348–376; the sequence is LPAFAVIGICCGFLGAVFVYLHRQVMLGV. At 377-390 the chain is on the cytoplasmic side; it reads RKHKALSQFLAKHR. Residues 391 to 408 traverse the membrane as a helical segment; it reads LLYPGIVTFVIASLTFPP. At 409-414 the chain is on the extracellular side; sequence GMGQFM. Positions 415-418 form an intramembrane region, note=Loop between two helices; it reads AGEL. The helical intramembrane region spans 419 to 426; that stretch reads MPREAIST. Topologically, residues 427 to 457 are extracellular; that stretch reads LFDNNTWVKHIGDPKSLGQSAVWIHPQVNVV. An intramembrane region (helical) is located at residues 458 to 475; that stretch reads IIILLFFVMKFWMSIVAT. Positions 476–482 form an intramembrane region, note=Loop between two helices; that stretch reads TMPIPCG. Residues 482–486 carry the Selectivity filter part_3 motif; that stretch reads GGFMP. The segment at residues 483–498 is an intramembrane region (helical); it reads GFMPVFVLGAAFGRLV. F484 serves as a coordination point for chloride. The Extracellular portion of the chain corresponds to 499–521; that stretch reads GEIMAMLFPEGILFDDIIYKILP. The helical intramembrane region spans 522–538; it reads GGYAVIGAAALTGAVSH. Positions 539 to 540 form an intramembrane region, note=Loop between two helices; sequence TV. The helical intramembrane region spans 541 to 554; that stretch reads STAVICFELTGQIA. Over 555–557 the chain is Extracellular; sequence HIL. An intramembrane region (helical) is located at residues 558-571; sequence PMMVAVILANMVAQ. Residues 572–575 constitute an intramembrane region (note=Loop between two helices); that stretch reads SLQP. The helical intramembrane region spans 576 to 578; sequence SLY. Y578 contacts chloride. Residues 579 to 994 lie on the Cytoplasmic side of the membrane; sequence DSIIQVKKLP…DEEDEDELIL (416 aa). The CBS 1 domain occupies 609-668; sequence MVRDVKFVSASCTYGELRNLLQTTTVKTLPLVDSKDSMILLGSVERSELQSLLQRHLCAE. Disordered stretches follow at residues 710-769, 880-923, and 965-994; these read EDED…SADQ, TKSG…DGAP, and NLGP…ELIL. A compositionally biased stretch (pro residues) spans 725 to 741; that stretch reads TPTPPPPPPPPLPPQFP. The region spanning 827–882 is the CBS 2 domain; that stretch reads IDQSPFQLVEQTTLHKTHTLFSLLGLHLAYVTSMGKLRGVLALEELQKAIKGHTKS. Residue S892 is modified to Phosphoserine. Acidic residues predominate over residues 985-994; that stretch reads DEEDEDELIL.

It belongs to the chloride channel (TC 2.A.49) family. ClC-1/CLCN1 subfamily. As to quaternary structure, homodimer. Predominantly expressed in skeletal muscles.

Its subcellular location is the cell membrane. It localises to the sarcolemma. The protein localises to the T-tubule. It catalyses the reaction chloride(in) = chloride(out). The catalysed reaction is bromide(in) = bromide(out). The enzyme catalyses iodide(out) = iodide(in). It carries out the reaction thiocyanate(in) = thiocyanate(out). It catalyses the reaction nitrate(in) = nitrate(out). Its activity is regulated as follows. Modulated by membrane voltage with depolarization favouring channel opening and hyperpolarization favouring channel closure. Inhibited by acidic pH and ATP binding due to a shift of voltage dependence of common gating to more positive voltages. Inhibited by 9-anthracene-carboxylic acid. In terms of biological role, voltage-gated chloride channel involved in skeletal muscle excitability. Generates most of the plasma membrane chloride conductance in skeletal muscle fibers, stabilizes the resting membrane potential and contributes to the repolarization phase during action potential firing. Forms a homodimeric channel where each subunit has its own ion conduction pathway. Conducts double-barreled currents controlled by two types of gates, two fast glutamate gates that control each subunit independently and a slow common gate that opens and shuts off both subunits simultaneously. Has a significant open probability at muscle resting potential and is further activated upon membrane depolarization. Permeable to small monovalent anions with ion selectivity for chloride &gt; thiocyanate &gt; bromide &gt; nitrate &gt; iodide. This is Chloride channel protein 1 (Clcn1) from Rattus norvegicus (Rat).